Reading from the N-terminus, the 962-residue chain is Protease 3 (962 aa).

The signal sequence occupies residues 1 to 23 (MPRSTWFKALLLFVALWAPLSQA). His-88 provides a ligand contact to Zn(2+). The active-site Proton acceptor is Glu-91. Zn(2+) contacts are provided by His-92 and Glu-169.

The protein belongs to the peptidase M16 family. Monomer. The cofactor is Zn(2+).

The protein resides in the periplasm. It carries out the reaction Preferential cleavage of 16-Tyr-|-Leu-17 and 25-Phe-|-Tyr-26 bonds of oxidized insulin B chain. Also acts on other substrates of Mw less than 7 kDa such as insulin and glucagon.. In terms of biological role, endopeptidase that degrades small peptides of less than 7 kDa, such as glucagon and insulin. The protein is Protease 3 (ptrA) of Shigella flexneri.